A 509-amino-acid chain; its full sequence is Activin receptor type-1 (509 aa).

An N-terminal signal peptide occupies residues 1–20 (MVDGAMILSVLMMMALPSPS). Residues 21-123 (MEDEEPKVNP…FPGSQNFHLE (103 aa)) lie on the Extracellular side of the membrane. N102 is a glycosylation site (N-linked (GlcNAc...) asparagine). A helical membrane pass occupies residues 124-146 (VGLIILSVVFAVCLFACILGVAL). The Cytoplasmic segment spans residues 147–509 (RKFKRRNQER…NSLDKLKTDC (363 aa)). The GS domain occupies 178-207 (STLAELLDHSCTSGSGSGLPFLVQRTVARQ). The 295-residue stretch at 208–502 (ITLLECVGKG…KTLTKIDNSL (295 aa)) folds into the Protein kinase domain. Residues 214-222 (VGKGRYGEV) and K235 each bind ATP. The active-site Proton acceptor is the D336. S501 carries the phosphoserine modification.

It belongs to the protein kinase superfamily. TKL Ser/Thr protein kinase family. TGFB receptor subfamily. In terms of assembly, interacts with FKBP1A. Interacts with FCHO1. Interacts with CLU. Interacts with type II receptors AMHR2 and ACVR2A. Interacts with BMP7. Interacts with GDF2/BMP9. Interacts with BMP6 (when glycosylated); the interaction may induce HAMP expression. Interacts with TSC22D1/TSC-22. Mg(2+) serves as cofactor. The cofactor is Mn(2+). As to expression, urogenital ridge, testis, ovary, brain and lungs.

It is found in the membrane. It carries out the reaction L-threonyl-[receptor-protein] + ATP = O-phospho-L-threonyl-[receptor-protein] + ADP + H(+). It catalyses the reaction L-seryl-[receptor-protein] + ATP = O-phospho-L-seryl-[receptor-protein] + ADP + H(+). In terms of biological role, bone morphogenetic protein (BMP) type I receptor that is involved in a wide variety of biological processes, including bone, heart, cartilage, nervous, and reproductive system development and regulation. As a type I receptor, forms heterotetrameric receptor complexes with the type II receptors AMHR2, ACVR2A ors ACVR2B. Upon binding of ligands such as BMP7 or GDF2/BMP9 to the heteromeric complexes, type II receptors transphosphorylate ACVR1 intracellular domain. In turn, ACVR1 kinase domain is activated and subsequently phosphorylates SMAD1/5/8 proteins that transduce the signal. In addition to its role in mediating BMP pathway-specific signaling, suppresses TGFbeta/activin pathway signaling by interfering with the binding of activin to its type II receptor. Besides canonical SMAD signaling, can activate non-canonical pathways such as p38 mitogen-activated protein kinases/MAPKs. May promote the expression of HAMP, potentially via its interaction with BMP6. This Rattus norvegicus (Rat) protein is Activin receptor type-1 (Acvr1).